Here is a 79-residue protein sequence, read N- to C-terminus: Panulirin (79 aa).

The first 22 residues, 1–22, serve as a signal peptide directing secretion; sequence MKNKAVLMLMALFLVAVTQVHG. The propeptide occupies 23–26; the sequence is DPEP. 3 disulfides stabilise this stretch: Cys33/Cys63, Cys40/Cys56, and Cys46/Cys64. Positions 75-79 are excised as a propeptide; the sequence is QLLAA.

As to quaternary structure, monomer. Contains 3 disulfide bonds. In terms of tissue distribution, expressed in hemocytes (at protein level).

Its function is as follows. Involved in the melanization cascade in response to lipopolysaccharide (LPS). In vitro, reversibly and competitively inhibits trypsin (Ki=8.6 nM) but not serine proteases chymotrypsin, elastase, subtilisin, thrombin and plasmin, cysteine peptidase papain or metallopeptidase carboxypeptidase A. The protein is Panulirin of Panulirus argus (Caribbean spiny lobster).